We begin with the raw amino-acid sequence, 328 residues long: Tetraacyldisaccharide 4'-kinase (328 aa).

55-62 (TAGGNGKT) contacts ATP.

The protein belongs to the LpxK family.

The enzyme catalyses a lipid A disaccharide + ATP = a lipid IVA + ADP + H(+). The protein operates within glycolipid biosynthesis; lipid IV(A) biosynthesis; lipid IV(A) from (3R)-3-hydroxytetradecanoyl-[acyl-carrier-protein] and UDP-N-acetyl-alpha-D-glucosamine: step 6/6. Its function is as follows. Transfers the gamma-phosphate of ATP to the 4'-position of a tetraacyldisaccharide 1-phosphate intermediate (termed DS-1-P) to form tetraacyldisaccharide 1,4'-bis-phosphate (lipid IVA). In Escherichia coli O127:H6 (strain E2348/69 / EPEC), this protein is Tetraacyldisaccharide 4'-kinase.